We begin with the raw amino-acid sequence, 124 residues long: Fluoride-specific ion channel FluC (124 aa).

A run of 4 helical transmembrane segments spans residues 4-24 (ILAI…LAGG), 32-52 (AFPW…GLIM), 68-88 (GLTI…YETF), and 101-121 (LNVL…IMAA). The Na(+) site is built by Gly-75 and Thr-78.

The protein belongs to the fluoride channel Fluc/FEX (TC 1.A.43) family.

It is found in the cell inner membrane. It carries out the reaction fluoride(in) = fluoride(out). Na(+) is not transported, but it plays an essential structural role and its presence is essential for fluoride channel function. Its function is as follows. Fluoride-specific ion channel. Important for reducing fluoride concentration in the cell, thus reducing its toxicity. The sequence is that of Fluoride-specific ion channel FluC from Geobacter sulfurreducens (strain ATCC 51573 / DSM 12127 / PCA).